Reading from the N-terminus, the 211-residue chain is MPKIKWTNKDFNVFKIDGLEQRMNALNDHVRPKFHQLGDDFATYFSSKLGEEFFPHVAKHARRTVNPPQDSWVAFAPYKRGYKSLPHFQIGLWHSHLFIVLAIIYEAPQKNVMAERLLAHPSLFEQLSDDFIVSGDHMSPEAISLEEAKEDKLKELLLRLRDVKKGEFLIGRHIPKDQATKLTASEFHQLTEQTFNSLLPFYNVIVGKDLK.

The protein belongs to the UPF0637 family.

The sequence is that of UPF0637 protein Bsph_1379 from Lysinibacillus sphaericus (strain C3-41).